The sequence spans 40 residues: Large ribosomal subunit protein bL36 (40 aa).

The protein belongs to the bacterial ribosomal protein bL36 family.

This Corynebacterium jeikeium (strain K411) protein is Large ribosomal subunit protein bL36.